Reading from the N-terminus, the 747-residue chain is MFGGPGPGVLGAQGMAGPLRGRVEELKLPWWRESSPLVLRHSEAARLAADALLERGEAAYLRVISEERELPFLSALDVDYMTSHVRGGPELSEAQGQEASGPDRLSLLSEVTSGTYFPMASDIDPPDLDLGWPEVPQATGFSPTQAVVHFQRDKAKNIKDLLRFLFSQAHTVVAVVMDIFTDMELLCDLMEASSRRGVPVYLLLAQEHLRHFLEMCYKMDLNGEHLPNMRVRSTCGDTYCSKAGRRFTGQALEKFVLIDCEQVVAGSYSFTWLCSQAHTSMVLQLRGRIVEDFDREFRCLYAESQPVEGFCGGEDPLSPRALRPPPVALAFRPDVPSPTSSLPSSTSLSSIKQSPLMGRSSYLALPGGGDCSDTGVVSSSLGPARREASGQPSLHRQLSDPNHGSPPGLYRANLGKLGAYPWSQSSPALNHNSTSPLTLAVGSPLLPRSRPLLQFHRGAPALSRFPENGLPGSQEPSPLRGRWVPGTTLETVEEKEKKASPSQSRGQLDLLVPFPRAREVGDPDSGVTPNSGPLRPGEQAPEDRRLSPSQADSQLDLLSRALGTGGAPELGSLRPGDRALEDRRLSLNQSRGQSDLLMQYPKAQGSRVPLETNSSARPARRAPDERRQTLGHSQLDLITKFGPFRGEGPGPNGLPISSPARTAGAGSGDEKRLTLGHSKLDLITKYHQLHGARQGTEPGGPKGGHLNGGNSDLVRDEKRLTLGHSKLDLITKYNKSKFKQLRSRFES.

The tract at residues 1–309 (MFGGPGPGVL…LYAESQPVEG (309 aa)) is DUF1669. 7 disordered regions span residues 322–352 (LRPP…SSIK), 374–412 (TGVV…LYRA), 462–484 (LSRF…GRWV), 517–550 (AREV…SPSQ), 588–633 (NQSR…LGHS), 646–672 (GEGP…DEKR), and 692–715 (ARQG…DLVR). Residues 328-350 (ALAFRPDVPSPTSSLPSSTSLSS) are compositionally biased toward low complexity. Over residues 390–402 (GQPSLHRQLSDPN) the composition is skewed to polar residues. Gly residues predominate over residues 697-707 (EPGGPKGGHLN).

It belongs to the FAM83 family. In terms of assembly, may interact with RAF1. Phosphorylated in vitro by CSNK1A1.

It localises to the cytoplasm. In terms of biological role, may play a role in MAPK signaling. The chain is Protein FAM83C from Homo sapiens (Human).